The chain runs to 256 residues: Stage 0 sporulation protein A homolog (256 aa).

Positions 5-123 (KVLIADDNRE…VLGNRLRQLA (119 aa)) constitute a Response regulatory domain. Residues Asp-10, Asp-11, and Asp-56 each coordinate Ca(2+). Asp-56 carries the 4-aspartylphosphate modification. The segment at residues 188–207 (PLIARKYMTTPSRVERAIRH) is a DNA-binding region (H-T-H motif).

Ca(2+) is required as a cofactor.

It localises to the cytoplasm. May play the central regulatory role in sporulation. It may be an element of the effector pathway responsible for the activation of sporulation genes in response to nutritional stress. Spo0A may act in concert with spo0H (a sigma factor) to control the expression of some genes that are critical to the sporulation process. This is Stage 0 sporulation protein A homolog (spo0A) from Moorella thermoacetica (strain ATCC 39073 / JCM 9320).